The following is a 104-amino-acid chain: Large ribosomal subunit protein uL23 (104 aa).

This sequence belongs to the universal ribosomal protein uL23 family. As to quaternary structure, part of the 50S ribosomal subunit. Contacts protein L29, and trigger factor when it is bound to the ribosome.

Its function is as follows. One of the early assembly proteins it binds 23S rRNA. One of the proteins that surrounds the polypeptide exit tunnel on the outside of the ribosome. Forms the main docking site for trigger factor binding to the ribosome. This chain is Large ribosomal subunit protein uL23, found in Rhodospirillum rubrum (strain ATCC 11170 / ATH 1.1.1 / DSM 467 / LMG 4362 / NCIMB 8255 / S1).